Consider the following 128-residue polypeptide: Cytochrome c oxidase subunit 5B, mitochondrial (128 aa).

Residues M1–M30 constitute a mitochondrion transit peptide. 2 positions are modified to N6-acetyllysine: K67 and K85. 4 residues coordinate Zn(2+): C90, C92, C112, and C115. K120 carries the N6-acetyllysine modification.

This sequence belongs to the cytochrome c oxidase subunit 5B family. In terms of assembly, component of the cytochrome c oxidase (complex IV, CIV), a multisubunit enzyme composed of 14 subunits. The complex is composed of a catalytic core of 3 subunits MT-CO1, MT-CO2 and MT-CO3, encoded in the mitochondrial DNA, and 11 supernumerary subunits COX4I, COX5A, COX5B, COX6A, COX6B, COX6C, COX7A, COX7B, COX7C, COX8 and NDUFA4, which are encoded in the nuclear genome. The complex exists as a monomer or a dimer and forms supercomplexes (SCs) in the inner mitochondrial membrane with NADH-ubiquinone oxidoreductase (complex I, CI) and ubiquinol-cytochrome c oxidoreductase (cytochrome b-c1 complex, complex III, CIII), resulting in different assemblies (supercomplex SCI(1)III(2)IV(1) and megacomplex MCI(2)III(2)IV(2)).

The protein resides in the mitochondrion inner membrane. Its pathway is energy metabolism; oxidative phosphorylation. Component of the cytochrome c oxidase, the last enzyme in the mitochondrial electron transport chain which drives oxidative phosphorylation. The respiratory chain contains 3 multisubunit complexes succinate dehydrogenase (complex II, CII), ubiquinol-cytochrome c oxidoreductase (cytochrome b-c1 complex, complex III, CIII) and cytochrome c oxidase (complex IV, CIV), that cooperate to transfer electrons derived from NADH and succinate to molecular oxygen, creating an electrochemical gradient over the inner membrane that drives transmembrane transport and the ATP synthase. Cytochrome c oxidase is the component of the respiratory chain that catalyzes the reduction of oxygen to water. Electrons originating from reduced cytochrome c in the intermembrane space (IMS) are transferred via the dinuclear copper A center (CU(A)) of subunit 2 and heme A of subunit 1 to the active site in subunit 1, a binuclear center (BNC) formed by heme A3 and copper B (CU(B)). The BNC reduces molecular oxygen to 2 water molecules using 4 electrons from cytochrome c in the IMS and 4 protons from the mitochondrial matrix. This chain is Cytochrome c oxidase subunit 5B, mitochondrial (Cox5b), found in Mus musculus (Mouse).